The primary structure comprises 292 residues: UPF0282 protein MJ1629 (292 aa).

The protein belongs to the UPF0282 family.

This is UPF0282 protein MJ1629 from Methanocaldococcus jannaschii (strain ATCC 43067 / DSM 2661 / JAL-1 / JCM 10045 / NBRC 100440) (Methanococcus jannaschii).